Consider the following 1063-residue polypeptide: Probable hemoglobin and hemoglobin-haptoglobin-binding protein 1 (1063 aa).

A signal peptide spans 1-24; it reads MTNFKFSLLACSIAFALNASIAYA. 7 repeat units span residues 26–29, 30–33, 34–37, 38–41, 42–45, 46–49, and 50–53. The 7 X 4 AA tandem repeats of Q-P-T-N stretch occupies residues 26 to 53; the sequence is QPTNQPTNQPTNQPTNQPTNQPTNQPTN. The span at 28-55 shows a compositional bias: low complexity; the sequence is TNQPTNQPTNQPTNQPTNQPTNQPTNQN. Positions 28–57 are disordered; the sequence is TNQPTNQPTNQPTNQPTNQPTNQPTNQNSN. The short motif at 63–70 is the TonB box element; sequence EQINVSGS. A TBDR plug domain is found at 66-200; the sequence is NVSGSSENIN…LGGSVIFETK (135 aa). The region spanning 208 to 1063 is the TBDR beta-barrel domain; sequence DKDYYLSYKR…NYRMSVQFEF (856 aa). Residues 1046 to 1063 carry the TonB C-terminal box motif; that stretch reads NRFYAPGRNYRMSVQFEF.

It belongs to the TonB-dependent receptor family. Hemoglobin/haptoglobin binding protein subfamily.

Its subcellular location is the cell outer membrane. Acts as a receptor for hemoglobin or the hemoglobin/haptoglobin complex of the human host and is required for heme uptake. In Haemophilus influenzae (strain ATCC 51907 / DSM 11121 / KW20 / Rd), this protein is Probable hemoglobin and hemoglobin-haptoglobin-binding protein 1.